The sequence spans 89 residues: Cell division protein FtsL (89 aa).

Topologically, residues 1-22 (MIDRKHYHLVGSIGKDILNNGK) are cytoplasmic. Residues 23-40 (LPALLLIAVLASSSLVVI) form a helical membrane-spanning segment. Topologically, residues 41-89 (TTYQTRRLTVEREQLLLEQNILDIEWRNLILEDNVISDQSRFEFVATEQ) are periplasmic.

It belongs to the FtsL family. In terms of assembly, part of a complex composed of FtsB, FtsL and FtsQ.

The protein resides in the cell inner membrane. In terms of biological role, essential cell division protein. May link together the upstream cell division proteins, which are predominantly cytoplasmic, with the downstream cell division proteins, which are predominantly periplasmic. The polypeptide is Cell division protein FtsL (Moranella endobia (strain PCIT)).